Consider the following 367-residue polypeptide: Secondary metabolism regulator laeA (367 aa).

The interval 1-82 is disordered; sequence MFGQQQQQQP…PETYPGHEEN (82 aa). Positions 19–41 are enriched in polar residues; it reads LNHNSRWTPPNESAQPRRSSNAM. Basic and acidic residues-rich tracts occupy residues 47–56 and 71–82; these read TDRDPAEGHP and KSPETYPGHEEN.

The protein belongs to the methyltransferase superfamily. LaeA methyltransferase family. Component of the heterotrimeric velvet complex composed of laeA, veA and velB; VeA acting as a bridging protein between laeA and velB.

It is found in the nucleus. The enzyme catalyses L-methionyl-[protein] + S-adenosyl-L-methionine = S-methyl-L-methionyl-[protein] + S-adenosyl-L-homocysteine. Its function is as follows. Methyltransferase that performs automethylation. No other methyl-accepting substrate has been identified yet. Component of the velvet transcription factor complex that acts as a global regulator for secondary metabolite gene expression. Controls the expression of the monacolin K gene clusters. Also regulates pigmentation. The chain is Secondary metabolism regulator laeA from Monascus pilosus (Red mold).